The following is a 299-amino-acid chain: 4-hydroxybenzoate octaprenyltransferase (299 aa).

Transmembrane regions (helical) follow at residues 33–53 (VGFL…ADGV), 56–76 (WWTL…GCVI), 107–127 (LLMF…MNQL), 151–171 (LPQV…FAAI), 180–200 (WLLY…YAMV), 213–233 (IAIL…TLML), 247–267 (HTYW…FIIA), and 278–298 (AFMH…LATT).

The protein belongs to the UbiA prenyltransferase family. Requires Mg(2+) as cofactor.

It is found in the cell inner membrane. The enzyme catalyses all-trans-octaprenyl diphosphate + 4-hydroxybenzoate = 4-hydroxy-3-(all-trans-octaprenyl)benzoate + diphosphate. Its pathway is cofactor biosynthesis; ubiquinone biosynthesis. In terms of biological role, catalyzes the prenylation of para-hydroxybenzoate (PHB) with an all-trans polyprenyl group. Mediates the second step in the final reaction sequence of ubiquinone-8 (UQ-8) biosynthesis, which is the condensation of the polyisoprenoid side chain with PHB, generating the first membrane-bound Q intermediate 3-octaprenyl-4-hydroxybenzoate. The protein is 4-hydroxybenzoate octaprenyltransferase of Xylella fastidiosa (strain M12).